We begin with the raw amino-acid sequence, 122 residues long: Histone H2B subacrosomal variant (122 aa).

Basic residues predominate over residues 1 to 25; that stretch reads MARNVTKRNKRCRGHQKAIYKKKSH. The segment at 1 to 30 is disordered; it reads MARNVTKRNKRCRGHQKAIYKKKSHSSSES.

It belongs to the histone H2B family. As to expression, testis-specific. Restricted to the spermatid population of seminiferous epithelium. Not present in Sertoli cells, spermatogonia, spermatocytes or cells of the interstitial tissue (at protein level).

It localises to the cytoplasm. In terms of biological role, may act as an acrosome-nuclear docking protein in sperm. The chain is Histone H2B subacrosomal variant (SUBH2BV) from Bos taurus (Bovine).